Here is a 974-residue protein sequence, read N- to C-terminus: Translation initiation factor IF-2 (974 aa).

The disordered stretch occupies residues 31–376; it reads FVKSASSTVE…APAVGGVRLP (346 aa). Low complexity predominate over residues 52–68; the sequence is PSAKSADSAARPAAKPG. Positions 83–96 are enriched in pro residues; it reads GPRPGPKPAAPAPA. A compositionally biased stretch (low complexity) spans 97–133; the sequence is APAAAAPAATPAAQAPAPAAPAASTATPAAPASNAPK. Residues 134–147 show a composition bias toward pro residues; sequence PGRPTPAAPAPAAP. 2 stretches are compositionally biased toward low complexity: residues 148-166 and 179-191; these read AAPAAPAAASTPAAPSTGA and RVGNNPYSSAPAE. Pro residues-rich tracts occupy residues 195–210 and 253–266; these read PRPAPGAPRPGAPRPA and RPSPGSMPPRPNPG. A compositionally biased stretch (low complexity) spans 267-277; it reads AMPARSARPAP. Positions 279-332 are enriched in gly residues; the sequence is GRPGRPGGAPGGRPGGGGGGYRGGGAPGAGAGAPGGGAPAGGFRGRPGGGGRPG. The segment covering 349 to 358 has biased composition (basic residues); it reads RRGRKSKRQK. A tr-type G domain is found at 470 to 641; that stretch reads SRPPVVTVMG…AVLLTADAAL (172 aa). The G1 stretch occupies residues 479–486; the sequence is GHVDHGKT. 479 to 486 contributes to the GTP binding site; the sequence is GHVDHGKT. Residues 504 to 508 form a G2 region; sequence GITQH. A G3 region spans residues 529–532; the sequence is DTPG. GTP-binding positions include 529–533 and 583–586; these read DTPGH and NKID. A G4 region spans residues 583–586; sequence NKID. A G5 region spans residues 619-621; that stretch reads SAK.

The protein belongs to the TRAFAC class translation factor GTPase superfamily. Classic translation factor GTPase family. IF-2 subfamily.

It localises to the cytoplasm. Functionally, one of the essential components for the initiation of protein synthesis. Protects formylmethionyl-tRNA from spontaneous hydrolysis and promotes its binding to the 30S ribosomal subunits. Also involved in the hydrolysis of GTP during the formation of the 70S ribosomal complex. In Rhodococcus opacus (strain B4), this protein is Translation initiation factor IF-2.